The chain runs to 322 residues: MSPPAAVSPTTRSVELAAPAVKLPVGLSKNNTTATIEEMEGKWDDFKFAPIRESQVSRAMTRRYFQDLDNYAESDIVIIGAGSCGLSAAYILGKKRPDLRIAIIEASVSPGGGAWLGGQLFSAMVMRKPADAFLREVGVPYEDEGNYVVVKHAALFTSTIMSKVLQLPNIKLFNATCVEDLITRPSEEGVRISGVVTNWTLVSMHHDDQSCMDPNTINAPLVISTTGHDGPMGAFSVKRLVSMQRIEKLGGMRGLDMNVAEDAIVKGTREIVPGLIVGGMELSEVDGANRMGPTFGAMALSGLKAAEEALKIFDIRKKQNAF.

Residues Cys84, 105 to 106, Gly113, and Val178 each bind substrate; that span reads EA. At Cys211 the chain carries 2,3-didehydroalanine (Cys). Substrate-binding positions include Asp213, His228, Met280, and 290-292; that span reads RMG.

Belongs to the THI4 family. In terms of assembly, homooctamer. It depends on Fe cation as a cofactor. Post-translationally, during the catalytic reaction, a sulfide is transferred from Cys-211 to a reaction intermediate, generating a dehydroalanine residue.

Its subcellular location is the cytoplasm. It is found in the nucleus. It carries out the reaction [ADP-thiazole synthase]-L-cysteine + glycine + NAD(+) = [ADP-thiazole synthase]-dehydroalanine + ADP-5-ethyl-4-methylthiazole-2-carboxylate + nicotinamide + 3 H2O + 2 H(+). Its function is as follows. Involved in biosynthesis of the thiamine precursor thiazole. Catalyzes the conversion of NAD and glycine to adenosine diphosphate 5-(2-hydroxyethyl)-4-methylthiazole-2-carboxylic acid (ADT), an adenylated thiazole intermediate. The reaction includes an iron-dependent sulfide transfer from a conserved cysteine residue of the protein to a thiazole intermediate. The enzyme can only undergo a single turnover, which suggests it is a suicide enzyme. May have additional roles in adaptation to various stress conditions and in DNA damage tolerance. The chain is Thiamine thiazole synthase from Fusarium vanettenii (strain ATCC MYA-4622 / CBS 123669 / FGSC 9596 / NRRL 45880 / 77-13-4) (Fusarium solani subsp. pisi).